A 126-amino-acid polypeptide reads, in one-letter code: MSIIGIGTDIIEIFRIKNIVYNFKDKLAERILSVQELEKYKVNKNPIKFLAKRFAVKEAASKALGTGISYGIKFNQIELYNNNLGKPKLRFLKYALQKSEEMKCKSIFVSISDEKLYACALVILEK.

Mg(2+)-binding residues include Asp9 and Glu58.

It belongs to the P-Pant transferase superfamily. AcpS family. Requires Mg(2+) as cofactor.

It is found in the cytoplasm. The enzyme catalyses apo-[ACP] + CoA = holo-[ACP] + adenosine 3',5'-bisphosphate + H(+). Functionally, transfers the 4'-phosphopantetheine moiety from coenzyme A to a Ser of acyl-carrier-protein. This is Holo-[acyl-carrier-protein] synthase from Buchnera aphidicola subsp. Schizaphis graminum (strain Sg).